The primary structure comprises 408 residues: MTSPDERKSFWERHEFKFYRYGHVYALIYGQVVIDYVPQRALKRGVKVLLIAYGHLFSMLLIVVLPGYFCYHFRTLTDTLDRRLQLLFYVSFTNTAIKYATVIVTYVANTVHFEAINQRCTMQRTHLEFEFKNAPQEPKRPFEFFMYFKFCLINLMMMIQVCGIFAQYGEVGKGSVSQVRVHFAIYAFVLWNYTENMADYCYFINGSVLKYYRQFNLQLGSLRDEMDGLRPGGMLLHHCCELSDRLEELRRRCREIHDLQRESFRMHQFQLIGLMLSTLINNLTNFYTLFHMLAKQSLEEVSYPVVVGSVYATGFYIDTYIVALINEHIKLELEAVALTMRRFAEPREMDERLTREIEHLSLELLNYQPPMLCGLLHLDRRLVYLIAVTAFSYFITLVQFDLYLRKKS.

Over 1 to 20 (MTSPDERKSFWERHEFKFYR) the chain is Cytoplasmic. Residues 21–38 (YGHVYALIYGQVVIDYVP) form a helical membrane-spanning segment. The Extracellular portion of the chain corresponds to 39-48 (QRALKRGVKV). Residues 49 to 69 (LLIAYGHLFSMLLIVVLPGYF) traverse the membrane as a helical segment. The Cytoplasmic segment spans residues 70–86 (CYHFRTLTDTLDRRLQL). Residues 87–107 (LFYVSFTNTAIKYATVIVTYV) form a helical membrane-spanning segment. Residues 108-144 (ANTVHFEAINQRCTMQRTHLEFEFKNAPQEPKRPFEF) are Extracellular-facing. The helical transmembrane segment at 145–165 (FMYFKFCLINLMMMIQVCGIF) threads the bilayer. Residues 166–270 (AQYGEVGKGS…RESFRMHQFQ (105 aa)) are Cytoplasmic-facing. A helical transmembrane segment spans residues 271-291 (LIGLMLSTLINNLTNFYTLFH). The Extracellular portion of the chain corresponds to 292 to 304 (MLAKQSLEEVSYP). A helical membrane pass occupies residues 305 to 325 (VVVGSVYATGFYIDTYIVALI). Residues 326 to 381 (NEHIKLELEAVALTMRRFAEPREMDERLTREIEHLSLELLNYQPPMLCGLLHLDRR) lie on the Cytoplasmic side of the membrane. Residues 382–402 (LVYLIAVTAFSYFITLVQFDL) form a helical membrane-spanning segment. Residues 403 to 408 (YLRKKS) lie on the Extracellular side of the membrane.

Belongs to the insect chemoreceptor superfamily. Gustatory receptor (GR) family. Gr10a subfamily. As to expression, expressed in the medial aspect of the third antennal segment, and in neurons of the terminal external chemosensory organ of larvae.

The protein resides in the cell membrane. Its function is as follows. Probable gustatory receptor which mediates acceptance or avoidance behavior, depending on its substrates. This is Gustatory receptor 10a (Gr10a) from Drosophila melanogaster (Fruit fly).